A 118-amino-acid polypeptide reads, in one-letter code: Large ribosomal subunit protein bL19 (118 aa).

The protein belongs to the bacterial ribosomal protein bL19 family.

Functionally, this protein is located at the 30S-50S ribosomal subunit interface and may play a role in the structure and function of the aminoacyl-tRNA binding site. In Teredinibacter turnerae (strain ATCC 39867 / T7901), this protein is Large ribosomal subunit protein bL19.